A 111-amino-acid chain; its full sequence is Small ribosomal subunit protein bS16 (111 aa).

It belongs to the bacterial ribosomal protein bS16 family.

The chain is Small ribosomal subunit protein bS16 from Rickettsia canadensis (strain McKiel).